We begin with the raw amino-acid sequence, 482 residues long: ATP synthase subunit beta (482 aa).

An ATP-binding site is contributed by 162 to 169 (GGAGVGKT).

This sequence belongs to the ATPase alpha/beta chains family. F-type ATPases have 2 components, CF(1) - the catalytic core - and CF(0) - the membrane proton channel. CF(1) has five subunits: alpha(3), beta(3), gamma(1), delta(1), epsilon(1). CF(0) has four main subunits: a(1), b(1), b'(1) and c(9-12).

It is found in the cellular thylakoid membrane. The enzyme catalyses ATP + H2O + 4 H(+)(in) = ADP + phosphate + 5 H(+)(out). Its function is as follows. Produces ATP from ADP in the presence of a proton gradient across the membrane. The catalytic sites are hosted primarily by the beta subunits. In Synechococcus sp. (strain PCC 6716), this protein is ATP synthase subunit beta.